The chain runs to 167 residues: Xanthine-guanine phosphoribosyltransferase (167 aa).

5-phospho-alpha-D-ribose 1-diphosphate-binding positions include 47–48 (RG), Gln-79, and 102–110 (DDLVDSGKT). Gln-79 contributes to the GMP binding site. Residue Asp-103 coordinates Mg(2+). Guanine-binding residues include Asp-106 and Ile-149. Positions 106 and 149 each coordinate xanthine. Residues 106-110 (DSGKT) and 148-149 (WI) contribute to the GMP site.

Belongs to the purine/pyrimidine phosphoribosyltransferase family. XGPT subfamily. In terms of assembly, homotetramer. Mg(2+) is required as a cofactor.

The protein resides in the cell inner membrane. It catalyses the reaction GMP + diphosphate = guanine + 5-phospho-alpha-D-ribose 1-diphosphate. It carries out the reaction XMP + diphosphate = xanthine + 5-phospho-alpha-D-ribose 1-diphosphate. The catalysed reaction is IMP + diphosphate = hypoxanthine + 5-phospho-alpha-D-ribose 1-diphosphate. It functions in the pathway purine metabolism; GMP biosynthesis via salvage pathway; GMP from guanine: step 1/1. The protein operates within purine metabolism; XMP biosynthesis via salvage pathway; XMP from xanthine: step 1/1. Functionally, purine salvage pathway enzyme that catalyzes the transfer of the ribosyl-5-phosphate group from 5-phospho-alpha-D-ribose 1-diphosphate (PRPP) to the N9 position of the 6-oxopurines guanine and xanthine to form the corresponding ribonucleotides GMP (guanosine 5'-monophosphate) and XMP (xanthosine 5'-monophosphate), with the release of PPi. To a lesser extent, also acts on hypoxanthine. The chain is Xanthine-guanine phosphoribosyltransferase from Cereibacter sphaeroides (strain ATCC 17025 / ATH 2.4.3) (Rhodobacter sphaeroides).